The sequence spans 287 residues: Large ribosomal subunit protein uL2 (287 aa).

Residues 222-266 (RGIRPTVRGSAMNPNDHPHGGGEGRSPVGRDAPRTPWGKRHMGVK) are disordered.

This sequence belongs to the universal ribosomal protein uL2 family. As to quaternary structure, part of the 50S ribosomal subunit. Forms a bridge to the 30S subunit in the 70S ribosome.

Functionally, one of the primary rRNA binding proteins. Required for association of the 30S and 50S subunits to form the 70S ribosome, for tRNA binding and peptide bond formation. It has been suggested to have peptidyltransferase activity; this is somewhat controversial. Makes several contacts with the 16S rRNA in the 70S ribosome. This Mycoplasma pneumoniae (strain ATCC 29342 / M129 / Subtype 1) (Mycoplasmoides pneumoniae) protein is Large ribosomal subunit protein uL2.